The primary structure comprises 638 residues: Rik1-associated factor 1 (638 aa).

WD repeat units follow at residues 297 to 336, 486 to 525, 544 to 583, and 587 to 626; these read KEYS…CGIF, TTQK…KPLS, EVDA…PFIQ, and EMNS…GNKF.

As to quaternary structure, component of the Clr4 methyltransferase complex (ClrC) composed of at least clr4, rik1, pcu4, rbx1, raf1 and raf2. The cullin pcu4, rik1, raf1, raf2 and the ring-box protein rbx1 are components of an E3 ubiquitin ligase, whose activity is essential for heterochromatin assembly. Interacts with nup189.

The protein localises to the cytoplasm. Its subcellular location is the nucleus. The protein resides in the chromosome. Component of the Clr4 methyltransferase complex (ClrC) which contributes to the establishment of heterochromatin by specifically methylating histone H3 to form H3K9me. ClrC preferentially ubiquitylates H3K14 and ClrC-mediated H3 ubiquitination promotes clr4 methyltransferase activity for the methylation of H3K9. H3K9me represents a specific tag for epigenetic transcriptional repression by recruiting swi6/HP1 to methylated histones which leads to transcriptional silencing within centromeric heterochromatin, telomeric regions and at the silent mating-type loci. Has a role in both mitotic and meiotic chromosome segregation. This Schizosaccharomyces pombe (strain 972 / ATCC 24843) (Fission yeast) protein is Rik1-associated factor 1 (raf1).